A 356-amino-acid polypeptide reads, in one-letter code: Terpene synthase 10 (356 aa).

Positions 90–95 match the DDxx(x)D/E motif motif; the sequence is DDYLDS. Positions 232–240 match the NDxxSxxxD/E motif motif; sequence NDAVSYAKE.

It belongs to the terpene synthase family.

The catalysed reaction is geranylgeranyl diphosphate = beta-araneosene + diphosphate. Functionally, terpene synthase that converts its substrate farnesyl diphosphate (FPP) into several unidentified sesquiterpenes. TPS10 also converts geranylgeranyl diphosphate (GGPP) into the diterpene beta-araneosene. The sequence is that of Terpene synthase 10 from Dictyostelium purpureum (Slime mold).